Reading from the N-terminus, the 341-residue chain is L-threonine 3-dehydrogenase (341 aa).

Zn(2+) is bound at residue cysteine 38. Catalysis depends on charge relay system residues threonine 40 and histidine 43. Positions 63, 64, 93, 96, 99, and 107 each coordinate Zn(2+). NAD(+) contacts are provided by residues isoleucine 175, aspartate 195, arginine 200, 262 to 264, and 286 to 287; these read LGI and IY.

This sequence belongs to the zinc-containing alcohol dehydrogenase family. As to quaternary structure, homotetramer. It depends on Zn(2+) as a cofactor.

The protein localises to the cytoplasm. The enzyme catalyses L-threonine + NAD(+) = (2S)-2-amino-3-oxobutanoate + NADH + H(+). It participates in amino-acid degradation; L-threonine degradation via oxydo-reductase pathway; glycine from L-threonine: step 1/2. Its function is as follows. Catalyzes the NAD(+)-dependent oxidation of L-threonine to 2-amino-3-ketobutyrate. The sequence is that of L-threonine 3-dehydrogenase from Shewanella sp. (strain ANA-3).